A 367-amino-acid polypeptide reads, in one-letter code: Aspartate beta-hydroxylase domain-containing protein 1 (367 aa).

The interval Met-1–Asn-27 is disordered. Over Met-1–Pro-49 the chain is Cytoplasmic. A helical membrane pass occupies residues Leu-50–Cys-72. Over Tyr-73–Pro-367 the chain is Lumenal. Residues Arg-88–Leu-122 form a disordered region. Residue Ser-106 is modified to Phosphoserine.

This sequence belongs to the aspartyl/asparaginyl beta-hydroxylase family.

It is found in the membrane. The polypeptide is Aspartate beta-hydroxylase domain-containing protein 1 (ASPHD1) (Bos taurus (Bovine)).